Consider the following 469-residue polypeptide: Cyclin-dependent kinase 14 (469 aa).

A phosphoserine mark is found at serine 24, serine 78, and serine 95. The disordered stretch occupies residues 103–133 (FKTSSTGKESPKVRRHSSPSSPTSPKFGKAD). Serine 134 bears the Phosphoserine mark. One can recognise a Protein kinase domain in the interval 135 to 419 (YEKLEKLGEG…AQAALSHEYF (285 aa)). Residues 141 to 149 (LGEGSYATV) and lysine 164 each bind ATP. Aspartate 256 (proton acceptor) is an active-site residue. The segment at 449-469 (ESMRAFGKNNSYGKSLSNSKH) is disordered. The span at 456-469 (KNNSYGKSLSNSKH) shows a compositional bias: polar residues.

This sequence belongs to the protein kinase superfamily. CMGC Ser/Thr protein kinase family. CDC2/CDKX subfamily. In terms of assembly, found in a complex with LRP6, CCNY and CAPRIN2 during G2/M stage; CAPRIN2 functions as a scaffold for the complex by binding to CCNY via its N terminus and to CDK14 via its C terminus. Interacts with CCNY; CCNY mediates its recruitment to the plasma membrane and promotes phosphorylation of LRP6. Interacts with CCDN3 and CDKN1A. Interacts with SEPT8. Interacts with 14-3-3 proteina YWHAB, YWHAE, YWHAH and YWHAQ. As to expression, highly expressed in brain, pancreas, kidney, heart, testis and ovary. Also detected at lower levels in other tissues except in spleen and thymus where expression is barely detected.

The protein localises to the cell membrane. It localises to the cytoplasm. It is found in the nucleus. The enzyme catalyses L-seryl-[protein] + ATP = O-phospho-L-seryl-[protein] + ADP + H(+). It carries out the reaction L-threonyl-[protein] + ATP = O-phospho-L-threonyl-[protein] + ADP + H(+). Its activity is regulated as follows. Serine/threonine-protein kinase activity is promoted by associated cyclins CCDN3 and CCNY and repressed by CDKN1A. In terms of biological role, serine/threonine-protein kinase involved in the control of the eukaryotic cell cycle, whose activity is controlled by an associated cyclin. Acts as a cell-cycle regulator of Wnt signaling pathway during G2/M phase by mediating the phosphorylation of LRP6 at 'Ser-1490', leading to the activation of the Wnt signaling pathway. Acts as a regulator of cell cycle progression and cell proliferation via its interaction with CCDN3. Phosphorylates RB1 in vitro, however the relevance of such result remains to be confirmed in vivo. May also play a role in meiosis, neuron differentiation and may indirectly act as a negative regulator of insulin-responsive glucose transport. This Homo sapiens (Human) protein is Cyclin-dependent kinase 14 (CDK14).